A 175-amino-acid polypeptide reads, in one-letter code: Pathogenesis-related protein 1A1 (175 aa).

The first 21 residues, 1 to 21 (MKSSIFVACFITFIIFHSSQA), serve as a signal peptide directing secretion. The SCP domain maps to 29-146 (LNAHNAARRR…SGWVFITCNY (118 aa)). Cystine bridges form between Cys65–Cys135, Cys108–Cys114, and Cys130–Cys144.

Belongs to the CRISP family.

In terms of biological role, probably involved in the defense reaction of plants against pathogens. This is Pathogenesis-related protein 1A1 from Solanum lycopersicum (Tomato).